The sequence spans 603 residues: Elongation factor 4 (603 aa).

The region spanning 2–184 (NHIRNFSIIA…AVVALIPAPK (183 aa)) is the tr-type G domain. GTP contacts are provided by residues 14–19 (DHGKST) and 131–134 (NKMD).

This sequence belongs to the TRAFAC class translation factor GTPase superfamily. Classic translation factor GTPase family. LepA subfamily.

It localises to the cell inner membrane. It carries out the reaction GTP + H2O = GDP + phosphate + H(+). Required for accurate and efficient protein synthesis under certain stress conditions. May act as a fidelity factor of the translation reaction, by catalyzing a one-codon backward translocation of tRNAs on improperly translocated ribosomes. Back-translocation proceeds from a post-translocation (POST) complex to a pre-translocation (PRE) complex, thus giving elongation factor G a second chance to translocate the tRNAs correctly. Binds to ribosomes in a GTP-dependent manner. This is Elongation factor 4 from Polaromonas naphthalenivorans (strain CJ2).